The sequence spans 604 residues: Prostaglandin G/H synthase 2 (604 aa).

Residues Met-1–Ala-17 form the signal peptide. The region spanning Ala-18–Ser-55 is the EGF-like domain. Cystine bridges form between Cys-21-Cys-32, Cys-22-Cys-145, Cys-26-Cys-42, and Cys-44-Cys-54. An N-linked (GlcNAc...) asparagine glycan is attached at Asn-53. Arg-106 is a substrate binding site. The N-linked (GlcNAc...) asparagine glycan is linked to Asn-130. The Proton acceptor role is filled by His-193. Position 341 (Tyr-341) interacts with substrate. The active-site For cyclooxygenase activity is the Tyr-371. His-374 provides a ligand contact to heme b. Asn-396 carries an N-linked (GlcNAc...) asparagine glycan. Cys-526 carries the S-nitrosocysteine modification. Cys-555 and Cys-561 are oxidised to a cystine. Ser-565 is modified (O-acetylserine). Asn-580 is a glycosylation site (N-linked (GlcNAc...) asparagine).

The protein belongs to the prostaglandin G/H synthase family. As to quaternary structure, homodimer. The cofactor is heme b. S-nitrosylation by NOS2 (iNOS) activates enzyme activity. S-nitrosylation may take place on different Cys residues in addition to Cys-526. In terms of processing, acetylated at Ser-565 by SPHK1. During neuroinflammation, acetylation by SPHK1 promotes neuronal secretion of specialized preresolving mediators (SPMs), especially 15-R-lipoxin A4, which results in an increase of phagocytic microglia. Highest expression in kidney and urinary bladder.

The protein localises to the microsome membrane. The protein resides in the endoplasmic reticulum membrane. It is found in the nucleus inner membrane. Its subcellular location is the nucleus outer membrane. The catalysed reaction is (5Z,8Z,11Z,14Z)-eicosatetraenoate + AH2 + 2 O2 = prostaglandin H2 + A + H2O. It carries out the reaction (5Z,8Z,11Z,14Z)-eicosatetraenoate + 2 O2 = prostaglandin G2. It catalyses the reaction prostaglandin G2 + AH2 = prostaglandin H2 + A + H2O. The enzyme catalyses (5Z,8Z,11Z,14Z,17Z)-eicosapentaenoate + 2 O2 = prostaglandin G3. The catalysed reaction is prostaglandin G3 + AH2 = prostaglandin H3 + A + H2O. It carries out the reaction (8Z,11Z,14Z)-eicosatrienoate + 2 O2 = prostaglandin G1. It catalyses the reaction prostaglandin G1 + AH2 = prostaglandin H1 + A + H2O. The enzyme catalyses 2-(5Z,8Z,11Z,14Z)-eicosatetraenoyl-sn-glycero-3-phosphoethanolamine + 2 O2 = 2-(prostaglandin G2)-sn-glycero-3-phosphoethanolamine. The catalysed reaction is 2-(prostaglandin G2)-sn-glycero-3-phosphoethanolamine + AH2 = 2-(prostaglandin H2)-sn-glycero-3-phosphoethanolamine + A + H2O. It carries out the reaction 2-(5Z,8Z,11Z,14Z)-eicosatetraenoyl-sn-glycero-3-phosphocholine + 2 O2 = 2-(prostaglandin G2)-sn-glycero-3-phosphocholine. It catalyses the reaction 2-(prostaglandin G2)-sn-glycero-3-phosphocholine + AH2 = 2-(prostaglandin H2)-sn-glycero-3-phosphocholine + A + H2O. The enzyme catalyses (15S)-hydroperoxy-(5Z,8Z,11Z,13E)-eicosatetraenoate + AH2 = (15S)-hydroxy-(5Z,8Z,11Z,13E)-eicosatetraenoate + A + H2O. The catalysed reaction is 2-(5Z,8Z,11Z,14Z)-eicosatetraenoyl-sn-glycero-3-phosphocholine + AH2 + O2 = 2-[(15S)-hydroxy-(5Z,8Z,11Z,13E)-eicosatetraenoyl]-sn-glycero-3-phosphocholine + A + H2O. It carries out the reaction 2-(5Z,8Z,11Z,14Z)-eicosatetraenoyl-sn-glycero-3-phosphocholine + AH2 + O2 = 2-[(15R)-hydroxy-(5Z,8Z,11Z,13E)-eicosatetraenoyl]-sn-glycero-3-phosphocholine + A + H2O. It catalyses the reaction 2-(5Z,8Z,11Z,14Z)-eicosatetraenoyl-sn-glycero-3-phosphocholine + AH2 + O2 = 2-[(11R)-hydroxy-(5Z,8Z,12E,14Z)-eicosatetraenoyl]-sn-glycero-3-phosphocholine + A + H2O. The enzyme catalyses (9Z,12Z)-octadecadienoate + AH2 + O2 = 9-hydroxy-(10E,12Z)-octadecadienoate + A + H2O. The catalysed reaction is (9Z,12Z)-octadecadienoate + AH2 + O2 = 13-hydroxy-(9Z,11E)-octadecadienoate + A + H2O. It carries out the reaction (5Z,8Z,11Z,14Z)-eicosatetraenoate + AH2 + O2 = (15R)-hydroxy-(5Z,8Z,11Z,13E)-eicosatetraenoate + A + H2O. It catalyses the reaction (5Z,8Z,11Z,14Z)-eicosatetraenoate + AH2 + O2 = (11R)-hydroxy-(5Z,8Z,12E,14Z)-eicosatetraenoate + A + H2O. The enzyme catalyses (5Z,8Z,11Z,14Z,17Z)-eicosapentaenoate + AH2 + O2 = (11R)-hydroxy-(5Z,8Z,12E,14Z,17Z)-eicosapentaenoate + A + H2O. The catalysed reaction is (5Z,8Z,11Z,14Z,17Z)-eicosapentaenoate + AH2 + O2 = (18S)-hydroxy-(5Z,8Z,11Z,14Z,16E)-eicosapentaenoate + A + H2O. It carries out the reaction (5Z,8Z,11Z,14Z,17Z)-eicosapentaenoate + AH2 + O2 = (18R)-hydroxy-(5Z,8Z,11Z,14Z,16E)-eicosapentaenoate + A + H2O. It catalyses the reaction (5Z,8Z,11Z,14Z,17Z)-eicosapentaenoate + AH2 + O2 = (15R)-hydroxy-(5Z,8Z,11Z,13E,17Z)-eicosapentaenoate + A + H2O. The enzyme catalyses (5Z,8Z,11Z,14Z,17Z)-eicosapentaenoate + AH2 + O2 = (15S)-hydroxy-(5Z,8Z,11Z,13E,17Z)-eicosapentaenoate + A + H2O. The catalysed reaction is (7Z,10Z,13Z,16Z,19Z)-docosapentaenoate + AH2 + O2 = 13R-hydroxy-(7Z,10Z,14E,16Z,19Z)-docosapentaenoate + A + H2O. It carries out the reaction (4Z,7Z,10Z,13Z,16Z,19Z)-docosahexaenoate + AH2 + O2 = 13-hydroxy-(4Z,7Z,10Z,14E,16Z,19Z)-docosahexaenoate + A + H2O. It catalyses the reaction (5S)-hydroxy-(6E,8Z,11Z,14Z)-eicosatetraenoate + AH2 + O2 = (5S,15R)-dihydroxy-(6E,8Z,11Z,13E)-eicosatetraenoate + A + H2O. The enzyme catalyses (4Z,7Z,10Z,13Z,16Z,19Z)-docosahexaenoate + AH2 + O2 = 17R-hydroxy-(4Z,7Z,10Z,13Z,15E,19Z)-docosahexaenoate + A + H2O. The catalysed reaction is (5S)-hydroxy-(6E,8Z,11Z,14Z)-eicosatetraenoate + AH2 + O2 = (5S,15S)-dihydroxy-(6E,8Z,11Z,13E)-eicosatetraenoate + A + H2O. It carries out the reaction (5S)-hydroxy-(6E,8Z,11Z,14Z)-eicosatetraenoate + AH2 + O2 = (5S,11R)-dihydroxy-(6E,8Z,12E,14Z)-eicosatetraenoate + A + H2O. It catalyses the reaction 2-(5Z,8Z,11Z,14Z-eicosatetraenoyl)-glycerol + 2 O2 = 2-glyceryl-prostaglandin G2. The enzyme catalyses 2-glyceryl-prostaglandin G2 + AH2 = 2-glyceryl-prostaglandin H2 + A + H2O. The catalysed reaction is (5Z,8Z,11Z,14Z)-eicosatetraenoate + O2 = (15R)-hydroperoxy-(5Z,8Z,11Z,13E)-eicosatetraenoate. It carries out the reaction (5Z,8Z,11Z,14Z)-eicosatetraenoate + O2 = 11R-hydroperoxy-(5Z,8Z,12E,14Z)-eicosatetraenoate. It catalyses the reaction (9Z,12Z)-octadecadienoate + AH2 + O2 = (9R)-hydroxy-(10E,12Z)-octadecadienoate + A + H2O. The enzyme catalyses (9Z,12Z)-octadecadienoate + AH2 + O2 = (9S)-hydroxy-(10E,12Z)-octadecadienoate + A + H2O. The catalysed reaction is (9Z,12Z)-octadecadienoate + AH2 + O2 = (13S)-hydroxy-(9Z,11E)-octadecadienoate + A + H2O. It carries out the reaction (9Z,12Z)-octadecadienoate + AH2 + O2 = (13R)-hydroxy-(9Z,11E)-octadecadienoate + A + H2O. It participates in lipid metabolism; prostaglandin biosynthesis. Functionally, dual cyclooxygenase and peroxidase in the biosynthesis pathway of prostanoids, a class of C20 oxylipins mainly derived from arachidonate ((5Z,8Z,11Z,14Z)-eicosatetraenoate, AA, C20:4(n-6)), with a particular role in the inflammatory response. The cyclooxygenase activity oxygenates AA to the hydroperoxy endoperoxide prostaglandin G2 (PGG2), and the peroxidase activity reduces PGG2 to the hydroxy endoperoxide prostaglandin H2 (PGH2), the precursor of all 2-series prostaglandins and thromboxanes. This complex transformation is initiated by abstraction of hydrogen at carbon 13 (with S-stereochemistry), followed by insertion of molecular O2 to form the endoperoxide bridge between carbon 9 and 11 that defines prostaglandins. The insertion of a second molecule of O2 (bis-oxygenase activity) yields a hydroperoxy group in PGG2 that is then reduced to PGH2 by two electrons. Similarly catalyzes successive cyclooxygenation and peroxidation of dihomo-gamma-linoleate (DGLA, C20:3(n-6)) and eicosapentaenoate (EPA, C20:5(n-3)) to corresponding PGH1 and PGH3, the precursors of 1- and 3-series prostaglandins. In an alternative pathway of prostanoid biosynthesis, converts 2-arachidonoyl lysophopholipids to prostanoid lysophopholipids, which are then hydrolyzed by intracellular phospholipases to release free prostanoids. Metabolizes 2-arachidonoyl glycerol yielding the glyceryl ester of PGH2, a process that can contribute to pain response. Generates lipid mediators from n-3 and n-6 polyunsaturated fatty acids (PUFAs) via a lipoxygenase-type mechanism. Oxygenates PUFAs to hydroperoxy compounds and then reduces them to corresponding alcohols. Plays a role in the generation of resolution phase interaction products (resolvins) during both sterile and infectious inflammation. Metabolizes docosahexaenoate (DHA, C22:6(n-3)) to 17R-HDHA, a precursor of the D-series resolvins (RvDs). As a component of the biosynthetic pathway of E-series resolvins (RvEs), converts eicosapentaenoate (EPA, C20:5(n-3)) primarily to 18S-HEPE that is further metabolized by ALOX5 and LTA4H to generate 18S-RvE1 and 18S-RvE2. In vascular endothelial cells, converts docosapentaenoate (DPA, C22:5(n-3)) to 13R-HDPA, a precursor for 13-series resolvins (RvTs) shown to activate macrophage phagocytosis during bacterial infection. In activated leukocytes, contributes to oxygenation of hydroxyeicosatetraenoates (HETE) to diHETES (5,15-diHETE and 5,11-diHETE). Can also use linoleate (LA, (9Z,12Z)-octadecadienoate, C18:2(n-6)) as substrate and produce hydroxyoctadecadienoates (HODEs) in a regio- and stereospecific manner,being (9R)-HODE ((9R)-hydroxy-(10E,12Z)-octadecadienoate) and (13S)-HODE ((13S)-hydroxy-(9Z,11E)-octadecadienoate) its major products. During neuroinflammation, plays a role in neuronal secretion of specialized preresolving mediators (SPMs) 15R-lipoxin A4 that regulates phagocytic microglia. In Oryctolagus cuniculus (Rabbit), this protein is Prostaglandin G/H synthase 2 (PTGS2).